A 213-amino-acid chain; its full sequence is Thiamine import ATP-binding protein ThiQ (213 aa).

Residues 1 to 212 (MIELNVTFDY…EQGRIVADQL (212 aa)) enclose the ABC transporter domain. 31-38 (GESGAGKS) provides a ligand contact to ATP.

It belongs to the ABC transporter superfamily. Thiamine importer (TC 3.A.1.19.1) family. In terms of assembly, the complex is composed of two ATP-binding proteins (ThiQ), two transmembrane proteins (ThiP) and a solute-binding protein (ThiB).

It localises to the cell inner membrane. It carries out the reaction thiamine(out) + ATP + H2O = thiamine(in) + ADP + phosphate + H(+). In terms of biological role, part of the ABC transporter complex ThiBPQ involved in thiamine import. Responsible for energy coupling to the transport system. The sequence is that of Thiamine import ATP-binding protein ThiQ from Haemophilus ducreyi (strain 35000HP / ATCC 700724).